The following is a 408-amino-acid chain: PTI1-like tyrosine-protein kinase 3 (408 aa).

Residues 59 to 76 (SSENEHLRSPKHHNDFGH) show a composition bias toward basic and acidic residues. The interval 59–91 (SSENEHLRSPKHHNDFGHHTRKPQAAVKPDALK) is disordered. Positions 113-395 (FGSKSLIGEG…IVVKALQPLL (283 aa)) constitute a Protein kinase domain. ATP-binding positions include 119 to 127 (IGEGSYGRA) and Lys-141. The active-site Proton acceptor is the Asp-245.

It belongs to the protein kinase superfamily. Tyr protein kinase family. Interacts with OXI1. Post-translationally, phosphorylated by OXI1.

It localises to the cell membrane. The enzyme catalyses L-tyrosyl-[protein] + ATP = O-phospho-L-tyrosyl-[protein] + ADP + H(+). In Arabidopsis thaliana (Mouse-ear cress), this protein is PTI1-like tyrosine-protein kinase 3 (PTI13).